A 920-amino-acid polypeptide reads, in one-letter code: Dynamin-2B (920 aa).

An N-acetylmethionine modification is found at M1. One can recognise a Dynamin-type G domain in the interval P35–P303. The G1 motif stretch occupies residues G45–S52. G45–A53 is a GTP binding site. Residues A71–R73 form a G2 motif region. Residues D143–G146 form a G3 motif region. A G4 motif region spans residues S204–D207. S204–A210 is a GTP binding site. Residues A238–G241 form a G5 motif region. Residue I246 to A249 coordinates GTP. Residues R507–D522 show a composition bias toward basic and acidic residues. 2 disordered regions span residues R507–P577 and I632–K657. A compositionally biased stretch (polar residues) spans A523–S545. Basic and acidic residues-rich tracts occupy residues S548–P567 and E641–N652. Residues G579–Q703 form the PH domain. The GED domain maps to L737–A830. An important for homodimerization region spans residues Y747–K761. The stretch at N788–S812 forms a coiled coil. Residues R828 to Y920 are disordered. Residues S833 to G849 are compositionally biased toward polar residues.

It belongs to the TRAFAC class dynamin-like GTPase superfamily. Dynamin/Fzo/YdjA family. In terms of assembly, interacts with DRP1A at the plasma membrane and in forming clathrin-coated vesicles (CCV). As to expression, ubiquitous. Preferentially expressed in siliques.

It is found in the cytoplasm. The protein resides in the cytoskeleton. It localises to the cytoplasmic vesicle. Its subcellular location is the clathrin-coated vesicle. The protein localises to the cell membrane. It catalyses the reaction GTP + H2O = GDP + phosphate + H(+). In terms of biological role, putative microtubule-associated force-producing protein, able to bind and hydrolyze GTP. Collaboratively with DRP1A, participates in clathrin-coated vesicle formation during endocytosis. With DRP1A and PIP5K3, required for the precise coordination of polar ARAC3/ROP6 and ARAC4/ROP2 placement and subsequent root hair positioning during planar polarity formation in root hair-forming cells. In Arabidopsis thaliana (Mouse-ear cress), this protein is Dynamin-2B.